Here is a 443-residue protein sequence, read N- to C-terminus: Ribosomal protein uS12 methylthiotransferase RimO (443 aa).

The 111-residue stretch at 8–118 folds into the MTTase N-terminal domain; it reads PKIGFVSLGC…VLSHIHHYVP (111 aa). 6 residues coordinate [4Fe-4S] cluster: cysteine 17, cysteine 53, cysteine 82, cysteine 150, cysteine 154, and cysteine 157. The Radical SAM core domain occupies 136–373; the sequence is LTPRHYAYLK…MQLQQQISTE (238 aa). Residues 376–442 enclose the TRAM domain; sequence QEKIGKVLPV…EYDLWGTIVE (67 aa).

It belongs to the methylthiotransferase family. RimO subfamily. It depends on [4Fe-4S] cluster as a cofactor.

It localises to the cytoplasm. The catalysed reaction is L-aspartate(89)-[ribosomal protein uS12]-hydrogen + (sulfur carrier)-SH + AH2 + 2 S-adenosyl-L-methionine = 3-methylsulfanyl-L-aspartate(89)-[ribosomal protein uS12]-hydrogen + (sulfur carrier)-H + 5'-deoxyadenosine + L-methionine + A + S-adenosyl-L-homocysteine + 2 H(+). In terms of biological role, catalyzes the methylthiolation of an aspartic acid residue of ribosomal protein uS12. In Proteus mirabilis (strain HI4320), this protein is Ribosomal protein uS12 methylthiotransferase RimO.